The sequence spans 489 residues: Para-nitrobenzyl esterase (489 aa).

Catalysis depends on S189, which acts as the Acyl-ester intermediate. Residue S189 is modified to Phosphoserine. Catalysis depends on charge relay system residues E310 and H399.

It belongs to the type-B carboxylesterase/lipase family. Monomer.

Functionally, catalyzes hydrolysis of several beta-lactam antibiotic PNB esters to the corresponding free acid and PNB alcohol. This chain is Para-nitrobenzyl esterase (pnbA), found in Bacillus subtilis (strain 168).